The chain runs to 178 residues: Probable DNA-directed RNA polymerase subunit delta (178 aa).

In terms of domain architecture, HTH HARE-type spans 14 to 81 (LSMIEVAHAI…GENTWGLRTW (68 aa)). The segment covering 120 to 143 (DDDVIDYDSDDPEDEEVEAEDTTS) has biased composition (acidic residues). The disordered stretch occupies residues 120–178 (DDDVIDYDSDDPEDEEVEAEDTTSDDAPAFEDLSNDDDTDVLPDGIEGQLSELNEDDEN).

This sequence belongs to the RpoE family. In terms of assembly, RNAP is composed of a core of 2 alpha, a beta and a beta' subunits. The core is associated with a delta subunit and one of several sigma factors.

Functionally, participates in both the initiation and recycling phases of transcription. In the presence of the delta subunit, RNAP displays an increased specificity of transcription, a decreased affinity for nucleic acids, and an increased efficiency of RNA synthesis because of enhanced recycling. The protein is Probable DNA-directed RNA polymerase subunit delta of Pediococcus pentosaceus (strain ATCC 25745 / CCUG 21536 / LMG 10740 / 183-1w).